We begin with the raw amino-acid sequence, 265 residues long: Exosome complex component RRP42 (265 aa).

Belongs to the RNase PH family. Component of the RNA exosome complex. Specifically part of the catalytically inactive RNA exosome core complex (Exo-9) which may associate with the catalytic subunits RRP6 and DIS3 in cytoplasmic- and nuclear-specific RNA exosome complex forms. Exo-9 is formed by a hexameric base ring of RNase PH domain-containing subunits and a cap ring consisting of CSL4, RRP4 and RRP40.

The protein resides in the cytoplasm. It localises to the nucleus. The protein localises to the nucleolus. In terms of biological role, non-catalytic component of the RNA exosome complex which has 3'-&gt;5' exoribonuclease activity and participates in a multitude of cellular RNA processing and degradation events. In the nucleus, the RNA exosome complex is involved in proper maturation of stable RNA species such as rRNA, snRNA and snoRNA, in the elimination of RNA processing by-products and non-coding 'pervasive' transcripts, such as antisense RNA species and cryptic unstable transcripts (CUTs), and of mRNAs with processing defects, thereby limiting or excluding their export to the cytoplasm. In the cytoplasm, the RNA exosome complex is involved in general mRNA turnover and in RNA surveillance pathways, preventing translation of aberrant mRNAs. The catalytic inactive RNA exosome core complex of 9 subunits (Exo-9) is proposed to play a pivotal role in the binding and presentation of RNA for ribonucleolysis, and to serve as a scaffold for the association with catalytic subunits and accessory proteins or complexes. RRP42 is part of the hexameric ring of RNase PH domain-containing subunits proposed to form a central channel which threads RNA substrates for degradation. The polypeptide is Exosome complex component RRP42 (RRP42) (Saccharomyces cerevisiae (strain ATCC 204508 / S288c) (Baker's yeast)).